Consider the following 492-residue polypeptide: Virion host shutoff protein (492 aa).

3 disordered regions span residues 110–130 (EEASDVDASPPPSPITDSRPS), 288–307 (SQARRAARRERANSRSLESM), and 334–371 (EDDYEEDPPLQPPDVAGGPRDGARSSSSEILTPPELVQ).

This sequence belongs to the herpesviridae VHS protein family. In terms of assembly, interacts with human EIF4H, EIF4A1 and EIF4A2; interaction with eIF4AI and EIF4A2 presumably allows Vhs protein to associate with the eIF4F cap-binding complex.

The protein localises to the virion. Functionally, minor structural protein that acts as an endoribonuclease during lytic infection. Degrades host mRNAs in the cytoplasm by cutting them at preferred sites, including some in regions of translation initiation. Together with inhibition of host splicing by ICP27, contributes to an overall decrease in host protein synthesis. Also, after the onset of viral transcription, accelerates the turnover of viral mRNA, thereby facilitating the sequential expression of different classes of viral genes. Binds translation initiation factors eIF4H, eIF4AI, and eIF4AII, thereby may interact directly with the translation initiation complex and thus digest specifically mRNAs. Also impedes antigen presentation by major histocompatibility complex class I and class II molecules, inhibits secretion of cytokines that would otherwise recruit lymphocytes and neutrophils cells to the site of infection and blocks the activation of dendritic cells. Impedes the alpha/beta interferon-mediated response to infection. Inhibits the integrated stress response (ISR) in the infected cell, this function requires the endonuclease activity. Stress granule formation is thus inhibited, which allows protein synthesis and viral replication. This Homo sapiens (Human) protein is Virion host shutoff protein (UL41).